Here is a 183-residue protein sequence, read N- to C-terminus: Holliday junction branch migration complex subunit RuvA (183 aa).

The segment at 1 to 64 is domain I; sequence MVVGIEGIIT…EDSNKFYGFL (64 aa). Residues 65–139 are domain II; sequence DKDEQKMFEM…DTKTKLENVS (75 aa). Residue serine 139 is a region of interest, flexible linker. The segment at 139–183 is domain III; the sequence is SDDKSEALAALLTLGFKQEKIISVLASAQATGTSELIKEALKKLG.

It belongs to the RuvA family. As to quaternary structure, homotetramer. Forms an RuvA(8)-RuvB(12)-Holliday junction (HJ) complex. HJ DNA is sandwiched between 2 RuvA tetramers; dsDNA enters through RuvA and exits via RuvB. An RuvB hexamer assembles on each DNA strand where it exits the tetramer. Each RuvB hexamer is contacted by two RuvA subunits (via domain III) on 2 adjacent RuvB subunits; this complex drives branch migration. In the full resolvosome a probable DNA-RuvA(4)-RuvB(12)-RuvC(2) complex forms which resolves the HJ.

Its subcellular location is the cytoplasm. In terms of biological role, the RuvA-RuvB-RuvC complex processes Holliday junction (HJ) DNA during genetic recombination and DNA repair, while the RuvA-RuvB complex plays an important role in the rescue of blocked DNA replication forks via replication fork reversal (RFR). RuvA specifically binds to HJ cruciform DNA, conferring on it an open structure. The RuvB hexamer acts as an ATP-dependent pump, pulling dsDNA into and through the RuvAB complex. HJ branch migration allows RuvC to scan DNA until it finds its consensus sequence, where it cleaves and resolves the cruciform DNA. The polypeptide is Holliday junction branch migration complex subunit RuvA (Campylobacter jejuni subsp. jejuni serotype O:23/36 (strain 81-176)).